Consider the following 287-residue polypeptide: Cyclopropane mycolic acid synthase 1 (287 aa).

Residues 33–34, 68–76, 94–99, and 123–124 each bind S-adenosyl-L-methionine; these read YS, LLDVGCGWG, TLSKNQ, and WE. Cysteine 269 is a catalytic residue.

This sequence belongs to the CFA/CMAS family. As to quaternary structure, homodimer.

It is found in the cytoplasm. The enzyme catalyses a 1-acyl-2-(9Z)-enoyl-sn-glycero-3-phospholipid + S-adenosyl-L-methionine = a 1-acyl-2-(9-cyclopronane)-acyl-sn-glycero-3-phospholipid + S-adenosyl-L-homocysteine + H(+). The protein operates within lipid metabolism; mycolic acid biosynthesis. In terms of biological role, catalyzes the conversion of a double bond to a cyclopropane ring at the distal position of an alpha mycolic acid via the transfer of a methylene group from S-adenosyl-L-methionine. Cyclopropanated mycolic acids are key factors participating in cell envelope permeability, host immunomodulation and persistence. In Mycobacterium tuberculosis (strain CDC 1551 / Oshkosh), this protein is Cyclopropane mycolic acid synthase 1 (cmaA1).